We begin with the raw amino-acid sequence, 67 residues long: Large ribosomal subunit protein bL35 (67 aa).

Belongs to the bacterial ribosomal protein bL35 family.

This Synechocystis sp. (strain ATCC 27184 / PCC 6803 / Kazusa) protein is Large ribosomal subunit protein bL35.